Here is a 1349-residue protein sequence, read N- to C-terminus: MPAPETGASSREKSLEDLQVATLEKGRSTSSFGADNEKPHDHHSLSDTIMAPPDGKQKDHGKAVDLNDDSLFAHLQEHEKEVLKRQLDAPSVKVSFFTLYRYASRKDILIILVSAICAIAAGAALPLFTILFGSLASAFQGISLGTMPYHEFYHKLTKNVLYFVYLGIAEFVTVYVSTVGFIYTGEHLTQKIRENYLEAILRQNMAYFDKLGAGEVTTRITADTNLIQDAISEKVGLTLTAFATFVTAFIVAYVKYWKLALICTSTIVALVMVMGGGSRFIVKYSKKSIESYGAGGTVAEEVISSIRNATAFGTQDKLAKQYETHLAEAEKWGVKQQVILGMMIGGMFGIMFSNYGLGFWMGSRFVVGKEVNVGQVLTVLMSILIGSFSLGNVAPNGQAFTNGVAAAAKIYSTIDRRSPLDPYSDEGKVLDHFEGNIEFRNVKHIYPSRPEVTVMEDVSLSMPAGKTTALVGPSGSGKSTVVGLVERFYLPVGGQVLLDGHDIQTLNLRWLRQQISLVSQEPVLFSTTIFRNIEHGLIGTKFEHESKDKIRELVENAARMANAHDFIMALPEGYDTNVGQRGFLLSGGQKQRIAIARAIVSDPKILLLDEATSALDTKSEGVVQAALDKAAEGRTTIVIAHRLSTIKTAHNIVAMVGGKIAEQGTHDELVDRKGTYYKLVEAQRINEEKEAEALEADADMDADDFGQEGVTRIKTAVSSSNSLDAVDEKARLEMKRTGTQKSVSSAVLSKKVPEQFEKYSLWTLVKFIGAFNRPELGYMLIGLTFSFLAGGGQPTQAFLYAKAISTLSLPESMFHKLRHDANFWSLMFFVVGIAQFISLSINGTAFAICSERLIRRARSQAFRSILRQDISFFDREENSTGALTSFLSTETKNLSGVSGVTLGTIIMTSTTLGAAMIIALAIGWKLALVCISVVPILLACGFLRFYMLAQFQQRSKSAYEGSASYACEATSAIRTVASLTREQDVWGVYHDQLQKQGRKSLISVLRSSLLYASSQALVFFCVALGFWYGGTLLGHHEYSIFRFFVCFSEILFGAQSAGTVFSFAPDMGKAKNAAAQFKKLFDSKPTIDIWSDEGEKLESMEGEIEFRDVHFRYPTRPEQPVLRGLNLSVKPGQYIALVGPSGCGKSTTIALLERFYDALAGGVFVDGKDITKLNVNSYRSFLSLVSQEPTLYQGTIKENILLGVDKDDVSEETLIKVCKDANIYDFVMSLPEGFDTVVGSKGGMLSGGQKQRVAIARALLRDPKVLLLDEATSALDSESEKVVQAALDAAARGRTTIAVAHRLSTIQNADIIYVFDQGKIVESGTHHELIRNKGRYYELVNLQSLGKTH.

The disordered stretch occupies residues 1 to 62 (MPAPETGASS…PDGKQKDHGK (62 aa)). The segment covering 35-45 (DNEKPHDHHSL) has biased composition (basic and acidic residues). Transmembrane regions (helical) follow at residues 108-128 (ILII…LPLF), 162-182 (YFVY…VGFI), 234-254 (KVGL…VAYV), and 257-277 (WKLA…MGGG). The 291-residue stretch at 112 to 402 (LVSAICAIAA…VAPNGQAFTN (291 aa)) folds into the ABC transmembrane type-1 1 domain. N-linked (GlcNAc...) asparagine glycosylation occurs at asparagine 308. 2 consecutive transmembrane segments (helical) span residues 339 to 359 (ILGM…GLGF) and 371 to 391 (VNVG…FSLG). In terms of domain architecture, ABC transporter 1 spans 437–682 (IEFRNVKHIY…KGTYYKLVEA (246 aa)). 472–479 (GPSGSGKS) contributes to the ATP binding site. 2 helical membrane passes run 779 to 799 (MLIG…QAFL) and 828 to 848 (FFVV…AFAI). The ABC transmembrane type-1 2 domain occupies 780–1069 (LIGLTFSFLA…VFSFAPDMGK (290 aa)). N-linked (GlcNAc...) asparagine glycans are attached at residues asparagine 878 and asparagine 893. Transmembrane regions (helical) follow at residues 896–916 (GVSG…GAAM), 926–948 (LALV…FYML), 1016–1036 (ALVF…LGHH), and 1043–1063 (FFVC…VFSF). One can recognise an ABC transporter 2 domain in the interval 1104–1342 (IEFRDVHFRY…KGRYYELVNL (239 aa)). The N-linked (GlcNAc...) asparagine glycan is linked to asparagine 1126. Residue 1139 to 1146 (GPSGCGKS) participates in ATP binding.

The protein belongs to the ABC transporter superfamily. ABCB family. Multidrug resistance exporter (TC 3.A.1.201) subfamily.

It localises to the cell membrane. The enzyme catalyses voriconazole(in) + ATP + H2O = voriconazole(out) + ADP + phosphate + H(+). Its function is as follows. Pleiotropic ABC efflux transporter that may be involved in A.fumigatus adaptation to azoles such as vorizonazole. The chain is ABC multidrug transporter mdr1 from Aspergillus fumigatus (strain ATCC MYA-4609 / CBS 101355 / FGSC A1100 / Af293) (Neosartorya fumigata).